Reading from the N-terminus, the 999-residue chain is MAGPVSLRELLMGASAWTSSESPEGSPTEGGGSAAGGPEPPWREDEICVVGIFGKTALRLNSEKFSLVNTVCDRQVFPLFRHQDPGDSGAGIRTEAGAVGEAGGAGDPGAGAGAGAGAGAGDPVRGGVTAAEGNRTEPGSQDYSLLQAYYNQESKVLYLLLTSICDNSQLLRACRALQSGEAGGGLSLPHAEAHEFWKHQEKVQCLSLLYLFSVCHILLLVHPTCSFDITYDRVFRALDGLRQKVLPLLKTAIKDCPVGKDWKLNCRPCPPRLLFLFQLNGALKVEPPRNQDPAHPDKPKKHSPKRRLQHALEDQIYRIFRKSRVLTNQSINCLFTVPANQAFVYIVPGSQEEDPVGMLLDQLKSHCTVKDPESLLVPAPLSGSRRYQVMRQHSRQQLSFHTDTSSSSSSGQLVDFTLREFLWQHVELVLSKKGFDDSVGRNPQPSHFELPTYQKWISAASKLYEVAIDGKEEDPASPTGELTSKILSSIKVLEGFLDIDTKFSENRCQKALPMAHSAYQSNLPHNYTMTVHKNQLAQALRVYSQHARGPAFHKYAMQLHEDCYKFWSNGHQLCEERSLTDQHCVHKFHSLPKSGEKPEADRNPPVLYHNSRARSTGACNCGRKQAPRDDPFDIKAANYDFYQLLEEKCCGKLDHINFPVFEPSTPDPAPAKNESSPAPPDADADKLKEKEPQTQGESTSLSLALSLGQSTDSLGTYPADPQAGGDNPEVHGQGEVKTEKRPNLVDRQASTVEYLPGMLHSNCPKGLLPKFSSWSLVKLGPAKSYNFHTGLDQQGFIPGTNYLMPWDIVIRTRAEDEGDLDTNSWPAPNKAVPGKRSAVVMGRGRRRDDIARAFVGFEYEDSRGRRFMCSGPDKVMKVMGSGPKESALKALNSDMPLYILSSSQGRGLKPHYAQLMRLFVVVPDAPLQIILTPQVRPGPPPCPVFYPEKQEITLPPDGLWVLRFPYAYVTERGPCFPPKENVQLMSYKVLRGVLKAVTQ.

Disordered regions lie at residues 15-42 (SAWT…EPPW), 83-136 (QDPG…GNRT), and 287-307 (PPRN…PKRR). Low complexity predominate over residues 18 to 27 (TSSESPEGSP). The segment covering 100–120 (GEAGGAGDPGAGAGAGAGAGA) has biased composition (gly residues). Residues 287–297 (PPRNQDPAHPD) show a composition bias toward basic and acidic residues. Basic residues predominate over residues 298 to 307 (KPKKHSPKRR). S477 and S676 each carry phosphoserine. The interval 661–734 (FEPSTPDPAP…GDNPEVHGQG (74 aa)) is disordered. A compositionally biased stretch (basic and acidic residues) spans 683 to 692 (DADKLKEKEP). Residues 693 to 714 (QTQGESTSLSLALSLGQSTDSL) show a composition bias toward polar residues. S750 and S903 each carry phosphoserine. Position 906 is an omega-N-methylarginine (R906).

The protein belongs to the SMG8 family. In terms of assembly, component of the SMG1C complex composed of SMG1, SMG8 and SMG9; the recruitment of SMG8 to SMG1 N-terminus induces a large conformational change in the SMG1 C-terminal head domain containing the catalytic domain. Forms heterodimers with SMG9; this assembly form may represent a SMG1C intermediate form. Post-translationally, phosphorylated by SMG1.

Functionally, involved in nonsense-mediated decay (NMD) of mRNAs containing premature stop codons. Is recruited by release factors to stalled ribosomes together with SMG1 and SMG9 (forming the SMG1C protein kinase complex) and, in the SMG1C complex, is required to mediate the recruitment of SMG1 to the ribosome:SURF complex and to suppress SMG1 kinase activity until the ribosome:SURF complex locates the exon junction complex (EJC). Acts as a regulator of kinase activity. The sequence is that of Nonsense-mediated mRNA decay factor SMG8 (SMG8) from Bos taurus (Bovine).